A 195-amino-acid polypeptide reads, in one-letter code: Imidazoleglycerol-phosphate dehydratase (195 aa).

Belongs to the imidazoleglycerol-phosphate dehydratase family.

Its subcellular location is the cytoplasm. It catalyses the reaction D-erythro-1-(imidazol-4-yl)glycerol 3-phosphate = 3-(imidazol-4-yl)-2-oxopropyl phosphate + H2O. Its pathway is amino-acid biosynthesis; L-histidine biosynthesis; L-histidine from 5-phospho-alpha-D-ribose 1-diphosphate: step 6/9. The protein is Imidazoleglycerol-phosphate dehydratase of Parafrankia sp. (strain EAN1pec).